A 389-amino-acid polypeptide reads, in one-letter code: Pre-mRNA-splicing factor PRP46 (389 aa).

7 WD repeats span residues 83–123, 126–165, 173–212, 215–254, 257–298, 308–347, and 356–389; these read AHQG…LKAV, GHVL…SDAG, GHLG…EAMT, GHTN…TELL, NHSK…NEFG, DNSR…LQQS, and PEQS…GTSY.

It belongs to the WD repeat PRL1/PRL2 family. Associated with the spliceosome.

The protein resides in the cytoplasm. It localises to the nucleus. Involved in pre-mRNA splicing and required for cell cycle progression at G2/M. The chain is Pre-mRNA-splicing factor PRP46 (PRP46) from Candida albicans (strain SC5314 / ATCC MYA-2876) (Yeast).